The sequence spans 566 residues: Proline--tRNA ligase (566 aa).

This sequence belongs to the class-II aminoacyl-tRNA synthetase family. ProS type 1 subfamily. As to quaternary structure, homodimer.

It localises to the cytoplasm. The enzyme catalyses tRNA(Pro) + L-proline + ATP = L-prolyl-tRNA(Pro) + AMP + diphosphate. Its function is as follows. Catalyzes the attachment of proline to tRNA(Pro) in a two-step reaction: proline is first activated by ATP to form Pro-AMP and then transferred to the acceptor end of tRNA(Pro). As ProRS can inadvertently accommodate and process non-cognate amino acids such as alanine and cysteine, to avoid such errors it has two additional distinct editing activities against alanine. One activity is designated as 'pretransfer' editing and involves the tRNA(Pro)-independent hydrolysis of activated Ala-AMP. The other activity is designated 'posttransfer' editing and involves deacylation of mischarged Ala-tRNA(Pro). The misacylated Cys-tRNA(Pro) is not edited by ProRS. The protein is Proline--tRNA ligase of Bacillus anthracis (strain A0248).